The sequence spans 470 residues: MKEYQTITEISGPLVFVETDEPVGYDDIVEIELSDGETRRGQVLESASDYVAIQVFEGTEGIDRDASVRFLGETMKMPVTEDLLGRVMDGTGQPIDGGPEIVPDERRDIVGEAINPFSREYPEEFIQTGVSAIDGMNTLVRGQKLPIFSASGLPHNDLALQIARQATVPEEEDGEDDEGSEFAVIFGAMGITAEEANEFMDDFERTGALERSVVFMNLADDPAVERTITPRLALTTAEYLAFEKDYHVLVILTDMTNYCEALREIGAAREEVPGRRGYPGYMYTDLAQLYERAGRIEGREGSVTQLPILTMPGDDDTHPIPDLTGYITEGQIYIDRDLNSQGIQPPINVLPSLSRLMDDGIGEGLTRADHADVKDQIFAAYAEGEDLRDLVNIVGREALSELDNKYLDFADRFEEEFVDQGTDTARSIDETLELGWDLLSMLPKDALNRIDEDLIEEHYREDETAETVEA.

This sequence belongs to the ATPase alpha/beta chains family. In terms of assembly, has multiple subunits with at least A(3), B(3), C, D, E, F, H, I and proteolipid K(x).

The protein resides in the cell membrane. Functionally, component of the A-type ATP synthase that produces ATP from ADP in the presence of a proton gradient across the membrane. The B chain is a regulatory subunit. This Haloarcula marismortui (strain ATCC 43049 / DSM 3752 / JCM 8966 / VKM B-1809) (Halobacterium marismortui) protein is A-type ATP synthase subunit B.